Reading from the N-terminus, the 98-residue chain is Citrate lyase acyl carrier protein (98 aa).

An O-(phosphoribosyl dephospho-coenzyme A)serine modification is found at Ser14.

This sequence belongs to the CitD family. As to quaternary structure, oligomer with a subunit composition of (alpha,beta,gamma)6.

Its subcellular location is the cytoplasm. Its function is as follows. Covalent carrier of the coenzyme of citrate lyase. The polypeptide is Citrate lyase acyl carrier protein (Vibrio cholerae serotype O1 (strain ATCC 39315 / El Tor Inaba N16961)).